Reading from the N-terminus, the 217-residue chain is Variable small protein 22 (217 aa).

An N-terminal signal peptide occupies residues 1–18 (MRKRISAIIMTLFMVFMS). Cys19 carries the N-palmitoyl cysteine lipid modification. A lipid anchor (S-diacylglycerol cysteine) is attached at Cys19. Positions 151–174 (LGKNDASDDDTKKAIKKDNSDKTK) are disordered. A compositionally biased stretch (basic and acidic residues) spans 155 to 174 (DASDDDTKKAIKKDNSDKTK).

Belongs to the variable small protein (Vsp) family.

Its subcellular location is the cell outer membrane. The Vlp and Vsp proteins are antigenically distinct proteins, only one vlp or vsp gene is transcriptionally active at any one time. Switching between these genes is a mechanism of host immune response evasion. The sequence is that of Variable small protein 22 from Borrelia hermsii.